The sequence spans 302 residues: Sulfate adenylyltransferase subunit 2 (302 aa).

The protein belongs to the PAPS reductase family. CysD subfamily. As to quaternary structure, heterodimer composed of CysD, the smaller subunit, and CysN.

The catalysed reaction is sulfate + ATP + H(+) = adenosine 5'-phosphosulfate + diphosphate. Its pathway is sulfur metabolism; hydrogen sulfide biosynthesis; sulfite from sulfate: step 1/3. Functionally, with CysN forms the ATP sulfurylase (ATPS) that catalyzes the adenylation of sulfate producing adenosine 5'-phosphosulfate (APS) and diphosphate, the first enzymatic step in sulfur assimilation pathway. APS synthesis involves the formation of a high-energy phosphoric-sulfuric acid anhydride bond driven by GTP hydrolysis by CysN coupled to ATP hydrolysis by CysD. The protein is Sulfate adenylyltransferase subunit 2 of Shigella boydii serotype 4 (strain Sb227).